A 365-amino-acid polypeptide reads, in one-letter code: Phospho-N-acetylmuramoyl-pentapeptide-transferase (365 aa).

10 helical membrane-spanning segments follow: residues 2–22, 51–71, 80–100, 118–138, 167–187, 196–216, 234–254, 256–276, 277–297, and 340–360; these read ISLI…TPLL, TLGG…SALY, PSWS…LGFI, GKFI…LILP, VAIV…TNAI, LAAG…FWEF, PLDL…FLWY, SNPA…GLFA, AMSI…LFVI, and FWMI…GDWV.

The protein belongs to the glycosyltransferase 4 family. MraY subfamily. Mg(2+) is required as a cofactor.

The protein resides in the cell membrane. The catalysed reaction is UDP-N-acetyl-alpha-D-muramoyl-L-alanyl-gamma-D-glutamyl-meso-2,6-diaminopimeloyl-D-alanyl-D-alanine + di-trans,octa-cis-undecaprenyl phosphate = di-trans,octa-cis-undecaprenyl diphospho-N-acetyl-alpha-D-muramoyl-L-alanyl-D-glutamyl-meso-2,6-diaminopimeloyl-D-alanyl-D-alanine + UMP. The protein operates within cell wall biogenesis; peptidoglycan biosynthesis. In terms of biological role, catalyzes the initial step of the lipid cycle reactions in the biosynthesis of the cell wall peptidoglycan: transfers peptidoglycan precursor phospho-MurNAc-pentapeptide from UDP-MurNAc-pentapeptide onto the lipid carrier undecaprenyl phosphate, yielding undecaprenyl-pyrophosphoryl-MurNAc-pentapeptide, known as lipid I. The sequence is that of Phospho-N-acetylmuramoyl-pentapeptide-transferase from Bifidobacterium adolescentis (strain ATCC 15703 / DSM 20083 / NCTC 11814 / E194a).